A 118-amino-acid chain; its full sequence is MNKIDFIEMEQMKKNIPVFRPGDTVKVHVKIVEGDKSRIQVFQGVVIGRQNGGIRESFTVRKISNGIGVERSFPLHSPSVDAIEVITRGQVRRAKLYYLRKLRGKASRIKEKKYVAGM.

This sequence belongs to the bacterial ribosomal protein bL19 family.

This protein is located at the 30S-50S ribosomal subunit interface and may play a role in the structure and function of the aminoacyl-tRNA binding site. The protein is Large ribosomal subunit protein bL19 of Geotalea uraniireducens (strain Rf4) (Geobacter uraniireducens).